Consider the following 523-residue polypeptide: Pituitary adenylate cyclase-activating polypeptide type I receptor (523 aa).

A signal peptide spans 1 to 19; that stretch reads MARVLQLSLTALLLPVAIA. The Extracellular portion of the chain corresponds to 20 to 151; sequence MHSDCIFKKE…SGDQDYYYLS (132 aa). 3 disulfide bridges follow: Cys-33–Cys-62, Cys-53–Cys-117, and Cys-76–Cys-133. N-linked (GlcNAc...) asparagine glycosylation is found at Asn-47, Asn-59, and Asn-116. The segment at 124-138 is important for ADCYAP1/PACAP ligand binding and specificity; that stretch reads EPFPHYFDACGFDDY. Residues 124 to 138 form an important for ligand binding and specificity region; it reads EPFPHYFDACGFDDY. Residues 152–176 traverse the membrane as a helical segment; that stretch reads VKALYTVGYSTSLATLTTAMVILCR. Residues 177-186 are Cytoplasmic-facing; it reads FRKLHCTRNF. A helical transmembrane segment spans residues 187–207; that stretch reads IHMNLFVSFMLRAISVFIKDW. Topologically, residues 208 to 222 are extracellular; it reads ILYAEQDSSHCFVST. Residues 223-248 form a helical membrane-spanning segment; that stretch reads VECKAVMVFFHYCVVSNYFWLFIEGL. The cysteines at positions 225 and 295 are disulfide-linked. Topologically, residues 249–266 are cytoplasmic; the sequence is YLFTLLVETFFPERRYFY. A helical transmembrane segment spans residues 267–289; the sequence is WYTIIGWGTPTVCVTVWAVLRLY. Topologically, residues 290–301 are extracellular; sequence FDDAGCWDMNDS. The chain crosses the membrane as a helical span at residues 302-328; it reads TALWWVIKGPVVGSIMVNFVLFIGIII. At 329 to 346 the chain is on the cytoplasmic side; it reads ILVQKLQSPDMGGNESSI. The helical transmembrane segment at 347 to 429 threads the bilayer; sequence YLTNLRLRVP…HYTVFAFSPE (83 aa). Topologically, residues 430 to 434 are extracellular; the sequence is NVSKR. Residues 435 to 458 form a helical membrane-spanning segment; that stretch reads ERLVFELGLGSFQGFVVAVLYCFL. Residues 459–523 are Cytoplasmic-facing; it reads NGEVQAEIKR…SSLPADNLAT (65 aa). 2 positions are modified to phosphoserine: Ser-489 and Ser-502.

This sequence belongs to the G-protein coupled receptor 2 family. As to quaternary structure, interacts with maxadilan, a vasodilator peptide from Lutzomyia longipalpis saliva; the interaction results in ADCYAP1R1 activation. As to expression, hypothalamus, anterior pituitary, adrenal medulla, testicular germ cells.

The protein localises to the cell membrane. G protein-coupled receptor activated by the neuropeptide pituitary adenylate cyclase-activating polypeptide (ADCYAP1/PACAP). Binds both PACAP27 and PACAP38 bioactive peptides. Ligand binding causes a conformation change that triggers signaling via guanine nucleotide-binding proteins (G proteins) and modulates the activity of downstream effectors. Activates cAMP-dependent pathway. May regulate the release of adrenocorticotropin, luteinizing hormone, growth hormone, prolactin, epinephrine, and catecholamine. May play a role in spermatogenesis and sperm motility. Causes smooth muscle relaxation and secretion in the gastrointestinal tract. The polypeptide is Pituitary adenylate cyclase-activating polypeptide type I receptor (Rattus norvegicus (Rat)).